Reading from the N-terminus, the 206-residue chain is Ribosomal RNA small subunit methyltransferase G (206 aa).

Residues Gly-74, Leu-79, 125–126 (VE), and Arg-140 each bind S-adenosyl-L-methionine.

The protein belongs to the methyltransferase superfamily. RNA methyltransferase RsmG family.

It localises to the cytoplasm. It carries out the reaction guanosine(527) in 16S rRNA + S-adenosyl-L-methionine = N(7)-methylguanosine(527) in 16S rRNA + S-adenosyl-L-homocysteine. In terms of biological role, specifically methylates the N7 position of guanine in position 527 of 16S rRNA. The polypeptide is Ribosomal RNA small subunit methyltransferase G (Shewanella putrefaciens (strain CN-32 / ATCC BAA-453)).